The chain runs to 433 residues: UDP-N-acetylglucosamine 1-carboxyvinyltransferase (433 aa).

Position 34–35 (34–35) interacts with phosphoenolpyruvate; it reads KN. R104 provides a ligand contact to UDP-N-acetyl-alpha-D-glucosamine. The active-site Proton donor is the C128. 2-(S-cysteinyl)pyruvic acid O-phosphothioketal is present on C128. UDP-N-acetyl-alpha-D-glucosamine-binding residues include D320 and I342.

Belongs to the EPSP synthase family. MurA subfamily.

It is found in the cytoplasm. It carries out the reaction phosphoenolpyruvate + UDP-N-acetyl-alpha-D-glucosamine = UDP-N-acetyl-3-O-(1-carboxyvinyl)-alpha-D-glucosamine + phosphate. Its pathway is cell wall biogenesis; peptidoglycan biosynthesis. Functionally, cell wall formation. Adds enolpyruvyl to UDP-N-acetylglucosamine. This is UDP-N-acetylglucosamine 1-carboxyvinyltransferase from Parasynechococcus marenigrum (strain WH8102).